The sequence spans 500 residues: Glycerol kinase (500 aa).

T17 lines the ADP pocket. The ATP site is built by T17, T18, and S19. T17 provides a ligand contact to sn-glycerol 3-phosphate. ADP is bound at residue R21. The sn-glycerol 3-phosphate site is built by R87, E88, Y139, and D243. Glycerol-binding residues include R87, E88, Y139, D243, and Q244. The ADP site is built by T265 and G308. 4 residues coordinate ATP: T265, G308, Q312, and G409. Positions 409 and 413 each coordinate ADP.

It belongs to the FGGY kinase family.

The catalysed reaction is glycerol + ATP = sn-glycerol 3-phosphate + ADP + H(+). The protein operates within polyol metabolism; glycerol degradation via glycerol kinase pathway; sn-glycerol 3-phosphate from glycerol: step 1/1. Its activity is regulated as follows. Inhibited by fructose 1,6-bisphosphate (FBP). Functionally, key enzyme in the regulation of glycerol uptake and metabolism. Catalyzes the phosphorylation of glycerol to yield sn-glycerol 3-phosphate. The polypeptide is Glycerol kinase (Pseudomonas fluorescens (strain Pf0-1)).